Consider the following 330-residue polypeptide: Ribose-phosphate pyrophosphokinase (330 aa).

ATP contacts are provided by residues 40-42 (DGE) and 99-100 (RQ). Mg(2+) is bound by residues histidine 133 and aspartate 174. Lysine 197 is an active-site residue. Residues arginine 199, aspartate 223, and 227 to 231 (DTGGT) each bind D-ribose 5-phosphate.

The protein belongs to the ribose-phosphate pyrophosphokinase family. Class I subfamily. As to quaternary structure, homohexamer. The cofactor is Mg(2+).

The protein localises to the cytoplasm. The enzyme catalyses D-ribose 5-phosphate + ATP = 5-phospho-alpha-D-ribose 1-diphosphate + AMP + H(+). It participates in metabolic intermediate biosynthesis; 5-phospho-alpha-D-ribose 1-diphosphate biosynthesis; 5-phospho-alpha-D-ribose 1-diphosphate from D-ribose 5-phosphate (route I): step 1/1. Functionally, involved in the biosynthesis of the central metabolite phospho-alpha-D-ribosyl-1-pyrophosphate (PRPP) via the transfer of pyrophosphoryl group from ATP to 1-hydroxyl of ribose-5-phosphate (Rib-5-P). The sequence is that of Ribose-phosphate pyrophosphokinase from Ureaplasma parvum serovar 3 (strain ATCC 700970).